Here is an 824-residue protein sequence, read N- to C-terminus: MSPVPCLSTCCCFRKIVEYSTMSWFRKSANDSLLETNHDRIPVAPPREVRAPSPRLPPSYQTSNEKMFRVRKAPSEEHTLANYAYVNRSDFDDKQIKHVRVNPGPAHHYIFSIRNDGSIKPGEIAFGVPHRKWAALSLDQEVRVTPFTFQQSEYVGSMILTADFNAKKNVTSEPLNADLMAREFSIQFGGQAFSKGMQMAFRFEDKEKNKTHTLSLVVKSIEGFDIGKAAAAASGASNTDSSATKPKQIEAGELLPNSVIVFDKEEGSMLNLIGKSKGKSAYRSIINPDWDFQQMGIGGLDTEFSHIFRRAFASRVFPPEFIEQLGMKHVRGILLFGPPGTGKTLMARQIGKMLNAREPKIVNGPQILDKYVGESESNVRKLFADAEEEWRRCGANSGLHIIIFDEIDAICKQRGSMAGSSSVHDTVVNQLLSKMDGVEQLNNILVIGMTNRRDMIDEALLRPGRLEVQMEVSLPDETGRLQILKIHTARMREYNKMDPNVDLEDISKRTKNFSGAELEGLVRAAQSSAMNRLVKAGGKAQADPDAIEKLAINSGDFDYALENDIKPAFGRSDESLNRFLSRGMIVWGPEVTKILDEGSLLAATVKNPENSGFRTVVLAGAAKTGKTSLAAQMAKSSDFPFVKVISPEDTVGFSESAKCMALKKAFEDAKRSKLSVLLIDNLERLIDYHPVGPRYSNLVIQALLVLLNAPPPAGHRLFVIATSSDRMFLRDMGLMDVFGDVIDIPKLTTAGQMMNVIQESNIYSDDQLPMIEQKLASICRGEGFHGVGIKHLLELIESARQCEADYRVPTLLNMMEGLALNLYR.

Residues 582–587 (RGMIVW) and 622–629 (AKTGKTSL) contribute to the ATP site. Thr627 serves as a coordination point for Mg(2+).

This sequence belongs to the AAA ATPase family. Homohexamer. Mg(2+) serves as cofactor.

The protein localises to the cytoplasm. The enzyme catalyses ATP + H2O = ADP + phosphate + H(+). Required for vesicle-mediated transport. Catalyzes the fusion of transport vesicles within the Golgi cisternae. Is also required for transport from the endoplasmic reticulum to the Golgi stack. Seems to function as a fusion protein required for the delivery of cargo proteins to all compartments of the Golgi stack independent of vesicle origin. In Caenorhabditis elegans, this protein is Vesicle-fusing ATPase (nsf-1).